The following is a 206-amino-acid chain: Large ribosomal subunit protein uL4 (206 aa).

The segment at 46–78 (GNRAQKDREQVKHTTKKPWRQKGTGRARAGMSS) is disordered. The span at 58–70 (HTTKKPWRQKGTG) shows a compositional bias: basic residues.

This sequence belongs to the universal ribosomal protein uL4 family. Part of the 50S ribosomal subunit.

In terms of biological role, one of the primary rRNA binding proteins, this protein initially binds near the 5'-end of the 23S rRNA. It is important during the early stages of 50S assembly. It makes multiple contacts with different domains of the 23S rRNA in the assembled 50S subunit and ribosome. Functionally, forms part of the polypeptide exit tunnel. In Burkholderia cenocepacia (strain ATCC BAA-245 / DSM 16553 / LMG 16656 / NCTC 13227 / J2315 / CF5610) (Burkholderia cepacia (strain J2315)), this protein is Large ribosomal subunit protein uL4.